The sequence spans 350 residues: Protein RecA (350 aa).

80 to 87 serves as a coordination point for ATP; the sequence is GPESSGKT.

It belongs to the RecA family.

The protein localises to the cytoplasm. Can catalyze the hydrolysis of ATP in the presence of single-stranded DNA, the ATP-dependent uptake of single-stranded DNA by duplex DNA, and the ATP-dependent hybridization of homologous single-stranded DNAs. It interacts with LexA causing its activation and leading to its autocatalytic cleavage. This chain is Protein RecA, found in Chlorobium limicola (strain DSM 245 / NBRC 103803 / 6330).